The following is a 177-amino-acid chain: Trafficking regulator of GLUT4 1 (177 aa).

The Cytoplasmic segment spans residues 1 to 105; it reads MAHPVQSEFP…QDQEAPRDYL (105 aa). Phosphoserine occurs at positions 48, 87, and 88. The tract at residues 71-92 is disordered; sequence EAPLPRSPSRASSRRASSIATT. Residues 72–88 are compositionally biased toward low complexity; the sequence is APLPRSPSRASSRRASS. The segment at residues 106–126 is an intramembrane region (helical); sequence ILAVVACFCPVWPLNLIPLII. Residues 127–153 are Cytoplasmic-facing; it reads SIMSRSSMQQGNVDGARRLGRLARLLS. A helical transmembrane segment spans residues 154–174; that stretch reads ITLIIMGIVIIMVAVTVNFTV. Residues 175-177 lie on the Extracellular side of the membrane; that stretch reads QKK.

This sequence belongs to the CD225/Dispanin family. As to quaternary structure, interacts with SLC2A4; the interaction is required for proper SLC2A4 reacycling after insulin stimulation. In terms of tissue distribution, expressed at high levels in heart, mammary gland, adrenal gland, stomach, smooth muscle and skeletal muscle, and at lower levels in brain and lung. Strongly down-regulated in lung cancer tissues, due to hypermethylation of the corresponding locus. Expressed in adipose tissue.

It is found in the cell membrane. The protein localises to the endomembrane system. The protein resides in the cytoplasm. It localises to the perinuclear region. In terms of biological role, regulates insulin-mediated adipose tissue glucose uptake and transport by modulation of SLC2A4 recycling. Not required for SLC2A4 membrane fusion upon an initial stimulus, but rather is necessary for proper protein recycling during prolonged insulin stimulation. This chain is Trafficking regulator of GLUT4 1, found in Homo sapiens (Human).